The chain runs to 256 residues: Enkurin (256 aa).

Residues 83 to 89 carry the SH3-binding motif; sequence PKKPAVP. One can recognise an Enkurin domain in the interval 160–252; the sequence is KRNEEIKKAQ…IIEKHKIIYI (93 aa). Residues 160-255 are interaction with TRPC proteins; it reads KRNEEIKKAQ…KHKIIYIANN (96 aa). The IQ domain occupies 176–187; the sequence is IQENLKKAAMKR.

Microtubule inner protein component of sperm flagellar doublet microtubules. Binds calmodulin via its IQ domain. Interacts with TRPC1, TRPC2, TRPC5, but not TRPC3. Interacts with CFAP45. Expressed in airway epithelial cells.

The protein resides in the cytoplasm. The protein localises to the cytoskeleton. Its subcellular location is the cilium axoneme. It localises to the flagellum axoneme. Its function is as follows. Adapter that functions to localize a calcium-sensitive signal transduction machinery in sperm to a calcium-permeable ion channel. Microtubule inner protein (MIP) part of the dynein-decorated doublet microtubules (DMTs) in cilia axoneme, which is required for motile cilia beating. The polypeptide is Enkurin (Homo sapiens (Human)).